Reading from the N-terminus, the 133-residue chain is Small ribosomal subunit protein uS8 (133 aa).

It belongs to the universal ribosomal protein uS8 family. As to quaternary structure, part of the 30S ribosomal subunit.

In terms of biological role, one of the primary rRNA binding proteins, it binds directly to 16S rRNA central domain where it helps coordinate assembly of the platform of the 30S subunit. In Ignicoccus hospitalis (strain KIN4/I / DSM 18386 / JCM 14125), this protein is Small ribosomal subunit protein uS8.